The primary structure comprises 120 residues: Small ribosomal subunit protein bS16 (120 aa).

Basic and acidic residues predominate over residues 84 to 110; it reads KREVKSNPEKAKPGKRAQERAAEKAQK. The disordered stretch occupies residues 84–120; it reads KREVKSNPEKAKPGKRAQERAAEKAQKAADAAAATAE. A compositionally biased stretch (low complexity) spans 111–120; the sequence is AADAAAATAE.

Belongs to the bacterial ribosomal protein bS16 family.

In Rhizobium rhizogenes (strain K84 / ATCC BAA-868) (Agrobacterium radiobacter), this protein is Small ribosomal subunit protein bS16.